Consider the following 530-residue polypeptide: MEKRVVIAVILSIVVLYAFSYMFPPPVANQKEKAGPVAAVQSQPSSAKLSAIDSVPAAATPQAGLAARNIVVDTDLFIAVFSTKGGGLQSFQLKHYKDKAGAVGRDIVLKNESDGDKLSLLSEGKSFGLEPSLVFQSSAKDTKLAGTEKSSIEFTVTSQTGVILKKVYSFSGNGYGINLHQELINTGSSRVEGAISLINYNRLVAETGDGRYEVYGPVTMAGDKVITDKVSDIAKGPKQFDNNVSWSAFADKYFMDAVIAVKNSIASARVAKISDNYVQTNVTSSPLSLNPGQSASMDYRLFYGPKDLDILKAQGSRLEEAIDFGWFSALAKPLLRSIKFFYSYTHNYGLAIIIITIILKVLFFPLTHKSYKSMKEMQKLQPKMVELKEKFKNDRDAMNRAVMDLYKTHKVNPMGGCLPMLVQIPVFFALYKALMFSIELRHAPFVLWITDLSAKDPYYVTPIIMGVTMFIQQKMTPTNMDPIQAKMMLALPVVFTFMFLNFPAGLVLYWLINNILTIAQQAYINKSLPA.

4 helical membrane-spanning segments follow: residues 5–25, 348–368, 418–438, and 492–512; these read VVIAVILSIVVLYAFSYMFPP, YGLAIIIITIILKVLFFPLTH, LPMLVQIPVFFALYKALMFSI, and PVVFTFMFLNFPAGLVLYWLI.

This sequence belongs to the OXA1/ALB3/YidC family. Type 1 subfamily. Interacts with the Sec translocase complex via SecD. Specifically interacts with transmembrane segments of nascent integral membrane proteins during membrane integration.

The protein resides in the cell inner membrane. Functionally, required for the insertion and/or proper folding and/or complex formation of integral membrane proteins into the membrane. Involved in integration of membrane proteins that insert both dependently and independently of the Sec translocase complex, as well as at least some lipoproteins. Aids folding of multispanning membrane proteins. The chain is Membrane protein insertase YidC from Geotalea daltonii (strain DSM 22248 / JCM 15807 / FRC-32) (Geobacter daltonii).